The following is a 186-amino-acid chain: Single-stranded DNA-binding protein 1 (186 aa).

One can recognise an SSB domain in the interval 1-108 (MDATVTVVGN…LEIDEIGPTL (108 aa)). The tract at residues 120-186 (QAGHGVSPDP…EDFDSDEVPF (67 aa)) is disordered. The span at 132 to 141 (DSQTGQGIDS) shows a compositional bias: polar residues. A compositionally biased stretch (acidic residues) spans 175-186 (SYEDFDSDEVPF).

In terms of assembly, homotetramer.

This Tropheryma whipplei (strain TW08/27) (Whipple's bacillus) protein is Single-stranded DNA-binding protein 1 (ssb1).